A 201-amino-acid chain; its full sequence is UPF0301 protein Avi_1069 (201 aa).

This sequence belongs to the UPF0301 (AlgH) family.

The sequence is that of UPF0301 protein Avi_1069 from Allorhizobium ampelinum (strain ATCC BAA-846 / DSM 112012 / S4) (Agrobacterium vitis (strain S4)).